The primary structure comprises 143 residues: Large ribosomal subunit protein uL16 (143 aa).

Belongs to the universal ribosomal protein uL16 family. As to quaternary structure, part of the 50S ribosomal subunit.

In terms of biological role, binds 23S rRNA and is also seen to make contacts with the A and possibly P site tRNAs. In Thermosynechococcus vestitus (strain NIES-2133 / IAM M-273 / BP-1), this protein is Large ribosomal subunit protein uL16.